Reading from the N-terminus, the 256-residue chain is Acetyl-coenzyme A carboxylase carboxyl transferase subunit alpha (256 aa).

A CoA carboxyltransferase C-terminal domain is found at 1–236; the sequence is MTDVARILKE…KLHLIDEITQ (236 aa).

This sequence belongs to the AccA family. As to quaternary structure, acetyl-CoA carboxylase is a heterohexamer composed of biotin carboxyl carrier protein (AccB), biotin carboxylase (AccC) and two subunits each of ACCase subunit alpha (AccA) and ACCase subunit beta (AccD).

It localises to the cytoplasm. It carries out the reaction N(6)-carboxybiotinyl-L-lysyl-[protein] + acetyl-CoA = N(6)-biotinyl-L-lysyl-[protein] + malonyl-CoA. It participates in lipid metabolism; malonyl-CoA biosynthesis; malonyl-CoA from acetyl-CoA: step 1/1. Functionally, component of the acetyl coenzyme A carboxylase (ACC) complex. First, biotin carboxylase catalyzes the carboxylation of biotin on its carrier protein (BCCP) and then the CO(2) group is transferred by the carboxyltransferase to acetyl-CoA to form malonyl-CoA. This chain is Acetyl-coenzyme A carboxylase carboxyl transferase subunit alpha, found in Streptococcus equi subsp. zooepidemicus (strain H70).